Consider the following 164-residue polypeptide: MFGENMCEYEADDIAEKISIKILKKYMRNKIYDTDNSNKPTNQFFCDLHILNKIIRYKCYRDDYERFVSEFIIHKLKYNFASVGYYVKPIIVTDKFELCFEYVVKCKIANHFVALVNSVILNEDSDKKDDKYYYCLIKKFCLNNEIDLKSDLFYYLSDYYCPKI.

This is an uncharacterized protein from Acanthamoeba polyphaga (Amoeba).